Here is a 511-residue protein sequence, read N- to C-terminus: Histidine ammonia-lyase (511 aa).

Residues 144–146 constitute a cross-link (5-imidazolinone (Ala-Gly)); it reads ASG. The residue at position 145 (Ser-145) is a 2,3-didehydroalanine (Ser).

Belongs to the PAL/histidase family. Post-translationally, contains an active site 4-methylidene-imidazol-5-one (MIO), which is formed autocatalytically by cyclization and dehydration of residues Ala-Ser-Gly.

Its subcellular location is the cytoplasm. It carries out the reaction L-histidine = trans-urocanate + NH4(+). It functions in the pathway amino-acid degradation; L-histidine degradation into L-glutamate; N-formimidoyl-L-glutamate from L-histidine: step 1/3. The sequence is that of Histidine ammonia-lyase from Halalkalibacterium halodurans (strain ATCC BAA-125 / DSM 18197 / FERM 7344 / JCM 9153 / C-125) (Bacillus halodurans).